Reading from the N-terminus, the 312-residue chain is Polyprenyl transferase atnF (312 aa).

N-linked (GlcNAc...) asparagine glycosylation is present at asparagine 9. 9 consecutive transmembrane segments (helical) span residues 30–50, 64–84, 111–131, 132–152, 154–174, 185–205, 229–249, 255–275, and 288–308; these read LHTI…FFYA, FIGI…WNDI, AMWV…WLLG, ADVT…PLCK, IIWA…LPPW, GLLP…LDLI, YLKA…VLAA, GFLL…WSIM, and IFLV…LNVS.

The protein belongs to the UbiA prenyltransferase family. Mg(2+) is required as a cofactor.

It localises to the membrane. Its pathway is secondary metabolite biosynthesis; terpenoid biosynthesis. Functionally, polyprenyl transferase; part of the gene cluster that mediates the biosynthesis of the meroterpenoids arthripenoids. The pathway begins with the HR-PKS atnH that catalyzes two chain-extension steps to form a reduced triketide, which then primes the SAT domain in the NR-PKS atnG to initiate three more cycles of extension to give a linear hexaketide corresponding to the polyketide part of arthripenoids. The FAD-dependent monooxygenase atnJ then performs an oxidative decarboxylation at C11 of the atnH/atnG product, via an electrophilic aromatic hydroxylation with concomitant ipso-decarboxylation. The membrane-bound polyprenyl transferase atnF then introduces a farnesyl group before the FAD-dependent monooxygenase atnK functions as the first epoxidase on terminal C12'-C13' olefin, followed by a second epoxidation on C7'-C8' catalyzed by atnA. The terpene cyclase/mutase atnI then initiates the sequential tricyclic ring formation through protonation of the terminal epoxide and catalyzes the regioselective and stereoselective 6/6/6-tricyclic ring formation. The cytochrome P450 monooxygenase atnM is responsible for hydroxylating both C1' and C10'. The next steps may involve ketoreduction and acetyl transfer by the ketoreductase atnB and the acetyltransferase atnC, and lead to the production of arthripenoid B, the final biosynthetic product of the atn cluster. The hydroquinone moiety in arthripenoid B is prone to undergo spontaneous oxidation to afford a benzoquinone compound, a key intermediate for generating structure diversity. For instance, addition of a cysteine followed by ring contraction gives arthripenoid A, tautomerization gives the main product arthripenoid C, addition of a molecular of water or amine affords arthripenoid D or E, respectively, and loss of one water forms arthripenoid F. The sequence is that of Polyprenyl transferase atnF from Arthrinium sp.